Reading from the N-terminus, the 1153-residue chain is Duffy receptor beta form (1153 aa).

The signal sequence occupies residues 1–21 (MEGKKKRPLFFLLVLLLSHKA). Residues 22–1085 (NNVLFERMKG…YECFTKGSST (1064 aa)) lie on the Extracellular side of the membrane. Asn134, Asn179, and Asn202 each carry an N-linked (GlcNAc...) asparagine glycan. Intrachain disulfides connect Cys214/Cys243 and Cys227/Cys234. N-linked (GlcNAc...) asparagine glycans are attached at residues Asn252 and Asn348. 4 disulfides stabilise this stretch: Cys297/Cys374, Cys412/Cys429, Cys424/Cys504, and Cys433/Cys502. N-linked (GlcNAc...) asparagine glycans are attached at residues Asn430 and Asn467. 4 disordered regions span residues 520-545 (LKSA…GAEK), 565-591 (DEAA…DNIE), 612-631 (RGAT…SYSG), and 655-981 (ENSE…LYSH). Polar residues-rich tracts occupy residues 531–542 (SHSTIQPMSSSG) and 574–586 (NGNQ…NIKG). N-linked (GlcNAc...) asparagine glycans are attached at residues Asn576 and Asn626. Basic and acidic residues predominate over residues 661–675 (LETKHKIFEPSKDNS). The span at 677 to 733 (NSENSGSMEFKATSSNPITEAVESSSAEGQVQEDSAHRSVNTGRDNSTISAATSDDG) shows a compositional bias: polar residues. Asn722 is a glycosylation site (N-linked (GlcNAc...) asparagine). Over residues 791–800 (IDGKNVDIAE) the composition is skewed to basic and acidic residues. Residues 819–834 (TDNGNVPRSGNKQNEG) are compositionally biased toward polar residues. N-linked (GlcNAc...) asparagine glycans are attached at residues Asn847 and Asn856. Over residues 867-878 (GNEKDFQKHDFM) the composition is skewed to basic and acidic residues. A compositionally biased stretch (low complexity) spans 884 to 942 (NDQTSSDQTSSDQTSSNQTSSDQTSSNQTSSDQTSSDQISSDQTSSDQTSSNQTSSDQT). N-linked (GlcNAc...) asparagine glycosylation is found at Asn900, Asn910, and Asn935. Over residues 945–969 (TEEHHRDNVRNPEIKSSEDMSKGDF) the composition is skewed to basic and acidic residues. Residues 971 to 981 (RNSNSNELYSH) show a composition bias toward polar residues. The helical transmembrane segment at 1086-1106 (GIGIVYFATGGAFLIILLLFV) threads the bilayer. Over 1107–1153 (SKNVASNDYEEEATFDEFVEYSDDIHRTPLMPNHIEHMQQFTPLDYS) the chain is Cytoplasmic.

It is found in the membrane. Binds to Neu5Gc-sialylated receptors on macaque erythrocytes. This Plasmodium knowlesi protein is Duffy receptor beta form.